Reading from the N-terminus, the 502-residue chain is Galactose/methyl galactoside import ATP-binding protein MglA (502 aa).

ABC transporter domains lie at 10–245 (LEMT…VGRE) and 255–502 (NTPK…SRYL). 42–49 (GENGAGKS) serves as a coordination point for ATP.

Belongs to the ABC transporter superfamily. Galactose/methyl galactoside importer (TC 3.A.1.2.3) family. In terms of assembly, the complex is composed of one ATP-binding protein (MglA), two transmembrane proteins (MglC) and a solute-binding protein (MglB).

It is found in the cell inner membrane. The enzyme catalyses D-galactose(out) + ATP + H2O = D-galactose(in) + ADP + phosphate + H(+). The catalysed reaction is methyl beta-D-galactoside(out) + ATP + H2O = methyl beta-D-galactoside(in) + ADP + phosphate + H(+). In terms of biological role, part of the ABC transporter complex MglABC involved in galactose/methyl galactoside import. Responsible for energy coupling to the transport system. The protein is Galactose/methyl galactoside import ATP-binding protein MglA of Vibrio vulnificus (strain CMCP6).